Consider the following 482-residue polypeptide: Proline--tRNA ligase (482 aa).

This sequence belongs to the class-II aminoacyl-tRNA synthetase family. ProS type 3 subfamily. Homodimer.

It localises to the cytoplasm. It catalyses the reaction tRNA(Pro) + L-proline + ATP = L-prolyl-tRNA(Pro) + AMP + diphosphate. Catalyzes the attachment of proline to tRNA(Pro) in a two-step reaction: proline is first activated by ATP to form Pro-AMP and then transferred to the acceptor end of tRNA(Pro). The protein is Proline--tRNA ligase of Natronomonas pharaonis (strain ATCC 35678 / DSM 2160 / CIP 103997 / JCM 8858 / NBRC 14720 / NCIMB 2260 / Gabara) (Halobacterium pharaonis).